The following is a 489-amino-acid chain: FK506-binding protein 4 (489 aa).

2 disordered regions span residues 40–157 (PDET…GLEL) and 199–378 (GNYV…TTGT). A compositionally biased stretch (acidic residues) spans 66–88 (MDIDESDDDYEEDSEEDSDDEEI). The span at 93 to 109 (SDKEKARKLKEAAALKE) shows a compositional bias: basic and acidic residues. Acidic residues-rich tracts occupy residues 110–125 (LEDE…DDEN), 143–157 (TDDD…GLEL), and 208–250 (GPSE…DELD). Basic and acidic residues-rich tracts occupy residues 267 to 282 (APKL…RTAD), 292 to 303 (MMAKDGKAKGAD), and 328 to 353 (EQKK…EAKK). Positions 362-378 (QGPTPSGQKPGETTTGT) are enriched in polar residues. The 84-residue stretch at 406–489 (VAMRYIGKLE…IFDVKLLEIK (84 aa)) folds into the PPIase FKBP-type domain.

This sequence belongs to the FKBP-type PPIase family. FKBP3/4 subfamily. In terms of assembly, binds to histones H3 and H4.

Its subcellular location is the nucleus. It carries out the reaction [protein]-peptidylproline (omega=180) = [protein]-peptidylproline (omega=0). Its activity is regulated as follows. Inhibited by both FK506 and rapamycin. PPIase that acts as a histone chaperone. Histone proline isomerase that increases the rate of cis-trans isomerization at prolines on the histone H3 N-terminal tail. Proline isomerization influences H3 methylation thereby regulating gene expression. In Aspergillus fumigatus (strain ATCC MYA-4609 / CBS 101355 / FGSC A1100 / Af293) (Neosartorya fumigata), this protein is FK506-binding protein 4 (fpr4).